We begin with the raw amino-acid sequence, 527 residues long: Amine oxidase [flavin-containing] A (527 aa).

Methionine 1 is subject to N-acetylmethionine. At 1-497 (MASREKTSIE…HTFWERNLPS (497 aa)) the chain is on the cytoplasmic side. The residue at position 383 (serine 383) is a Phosphoserine. Cysteine 406 carries the post-translational modification S-8alpha-FAD cysteine. Residues 498–518 (VTGLLKLIGFTTSVTALWIVA) traverse the membrane as a helical; Anchor for type IV membrane protein segment. Residues 519 to 527 (YKFRLLRRS) lie on the Mitochondrial intermembrane side of the membrane. The tract at residues 520 to 522 (KFR) is interaction with membrane phospholipid headgroups.

The protein belongs to the flavin monoamine oxidase family. As to quaternary structure, monomer, homo- or heterodimer (containing two subunits of similar size). Each subunit contains a covalently bound flavin. Enzymatically active as monomer. FAD is required as a cofactor.

The protein localises to the mitochondrion outer membrane. It catalyses the reaction a secondary aliphatic amine + O2 + H2O = a primary amine + an aldehyde + H2O2. The enzyme catalyses a primary methyl amine + O2 + H2O = an aldehyde + H2O2 + NH4(+). The catalysed reaction is (R)-adrenaline + O2 + H2O = (R)-3,4-dihydroxymandelaldehyde + methylamine + H2O2. It carries out the reaction dopamine + O2 + H2O = 3,4-dihydroxyphenylacetaldehyde + H2O2 + NH4(+). It catalyses the reaction tyramine + O2 + H2O = (4-hydroxyphenyl)acetaldehyde + H2O2 + NH4(+). The enzyme catalyses (R)-noradrenaline + O2 + H2O = (R)-3,4-dihydroxymandelaldehyde + H2O2 + NH4(+). The catalysed reaction is serotonin + O2 + H2O = (5-hydroxyindol-3-yl)acetaldehyde + H2O2 + NH4(+). It carries out the reaction kynuramine + O2 + H2O = 3-(2-aminophenyl)-3-oxopropanal + H2O2 + NH4(+). It catalyses the reaction tryptamine + O2 + H2O = indole-3-acetaldehyde + H2O2 + NH4(+). The enzyme catalyses 2-phenylethylamine + O2 + H2O = 2-phenylacetaldehyde + H2O2 + NH4(+). Functionally, catalyzes the oxidative deamination of primary and some secondary amine such as neurotransmitters, with concomitant reduction of oxygen to hydrogen peroxide and has important functions in the metabolism of neuroactive and vasoactive amines in the central nervous system and peripheral tissues. Preferentially oxidizes serotonin. Also catalyzes the oxidative deamination of kynuramine to 3-(2-aminophenyl)-3-oxopropanal that can spontaneously condense to 4-hydroxyquinoline. This Canis lupus familiaris (Dog) protein is Amine oxidase [flavin-containing] A.